The sequence spans 700 residues: UvrABC system protein B (700 aa).

Residues 26–183 (SGLHRGDRIQ…RALVGIQYLR (158 aa)) form the Helicase ATP-binding domain. 39–46 (GVTGSGKT) is a binding site for ATP. Positions 92–115 (YYDYYQPEAYVPSSDTYIEKDASI) match the Beta-hairpin motif. The 167-residue stretch at 430 to 596 (QVDDLLHEIR…GVTKSVDEVR (167 aa)) folds into the Helicase C-terminal domain. The segment at 608 to 627 (REGEAPAPRRLASESAPRSR) is disordered. One can recognise a UVR domain in the interval 631–666 (ETLVGELEIAMREAAVALDFEAAARLRDQLFEVRTA). A disordered region spans residues 667–700 (LGQAPSEARGNAQAPKRPPGSAPQRRAGGGRRGR).

It belongs to the UvrB family. In terms of assembly, forms a heterotetramer with UvrA during the search for lesions. Interacts with UvrC in an incision complex.

The protein resides in the cytoplasm. In terms of biological role, the UvrABC repair system catalyzes the recognition and processing of DNA lesions. A damage recognition complex composed of 2 UvrA and 2 UvrB subunits scans DNA for abnormalities. Upon binding of the UvrA(2)B(2) complex to a putative damaged site, the DNA wraps around one UvrB monomer. DNA wrap is dependent on ATP binding by UvrB and probably causes local melting of the DNA helix, facilitating insertion of UvrB beta-hairpin between the DNA strands. Then UvrB probes one DNA strand for the presence of a lesion. If a lesion is found the UvrA subunits dissociate and the UvrB-DNA preincision complex is formed. This complex is subsequently bound by UvrC and the second UvrB is released. If no lesion is found, the DNA wraps around the other UvrB subunit that will check the other stand for damage. The chain is UvrABC system protein B from Gemmatimonas aurantiaca (strain DSM 14586 / JCM 11422 / NBRC 100505 / T-27).